The primary structure comprises 460 residues: Argininosuccinate lyase (460 aa).

Belongs to the lyase 1 family. Argininosuccinate lyase subfamily.

Its subcellular location is the cytoplasm. The enzyme catalyses 2-(N(omega)-L-arginino)succinate = fumarate + L-arginine. The protein operates within amino-acid biosynthesis; L-arginine biosynthesis; L-arginine from L-ornithine and carbamoyl phosphate: step 3/3. This is Argininosuccinate lyase from Alteromonas mediterranea (strain DSM 17117 / CIP 110805 / LMG 28347 / Deep ecotype).